We begin with the raw amino-acid sequence, 633 residues long: Ankyrin repeat and SOCS box protein 2 (633 aa).

A UIM domain is found at 26-45 (SEDELVQMAIEQSLADKTRG). ANK repeat units follow at residues 102–131 (APVD…NLSE), 135–165 (EGWL…VIDQ), 169–198 (QEET…EPDI), 202–231 (SRET…DTNH), 235–264 (RGWT…KVEA), 268–297 (YGIT…DINT), 301–330 (DSAS…DANK), 334–363 (DGML…RTRV), 366–395 (SGIS…DVNA), 408–437 (RRSS…DPNR), 438–467 (DVIN…NIDA), and 474–502 (TAFP…NGEP). A Phosphoserine modification is found at serine 369. An SOCS box domain is found at 579–633 (EDWAVIKEKAEPPRPLAHLCRLRVRKAIGKYRIKLLDTLPLPGRLIRYLKYENTQ).

It belongs to the ankyrin SOCS box (ASB) family. Component of a probable ECS E3 ubiquitin-protein ligase complex which contains CUL5, either RBX1 or RNF7/RBX2, Elongin BC complex (ELOB and ELOC) and ASB2. Interacts with SKP2. Through its interaction with SKP2, likely to bridge the formation of dimeric E3-ubiquitin-protein ligase complexes composed of an ECS complex and an SCF(SKP2) complex. Interacts with JAK2; the interaction targets JAK2 for Notch-mediated proteasomal degradation. Interacts with TCF3/E2A; the interaction is mediated by SKP2 and targets TCF3 for Notch-mediated proteasomal degradation. Interacts with DES. Post-translationally, monoubiquitinated.

Its subcellular location is the cytoplasm. The protein localises to the cytoskeleton. The protein resides in the stress fiber. It localises to the myofibril. It is found in the sarcomere. Its subcellular location is the z line. The protein operates within protein modification; protein ubiquitination. Substrate-recognition component of a SCF-like ECS (Elongin-Cullin-SOCS-box protein) E3 ubiquitin-protein ligase complex which mediates the ubiquitination and subsequent proteasomal degradation of target proteins. Mediates Notch-induced ubiquitination and degradation of substrates including E2A and JAK2. Required during embryonic heart development for complete heart looping. Required for cardiomyocyte differentiation. Involved in myogenic differentiation and targets filamin FLNB for proteasomal degradation but not filamin FLNA. Also targets DES for proteasomal degradation. Acts as a negative regulator of skeletal muscle mass. The polypeptide is Ankyrin repeat and SOCS box protein 2 (Bos taurus (Bovine)).